We begin with the raw amino-acid sequence, 223 residues long: Killer cell lectin-like receptor subfamily B member 1B allele B (223 aa).

Topologically, residues 1-43 (MDSTTLVYADLNLARIQEPKHDSPPSLSPDTCRCPRWHRLALK) are cytoplasmic. Positions 6 to 11 (LVYADL) match the ITIM motif motif. Residues 32 to 35 (CRCP) carry the LCK-binding motif motif. The helical; Signal-anchor for type II membrane protein transmembrane segment at 44 to 64 (FGCAGLILLVLVVIGLCVLVL) threads the bilayer. The Extracellular portion of the chain corresponds to 65-223 (SVQKSSVQKI…LNHETPCNDS (159 aa)). The C-type lectin domain occupies 101–211 (HRDKCFHVSQ…CSSDNRWICQ (111 aa)). 2 disulfide bridges follow: Cys-122-Cys-210 and Cys-189-Cys-202.

As to quaternary structure, homodimer; disulfide-linked. Interacts with tyrosine kinase LCK. Binds PTPN6/SHP-1 in a phosphorylation-dependent manner. As to expression, expressed in NK cells and a subset of T-cells.

It localises to the membrane. Receptor for CLEC2D/OCIL. Ligand-binding contributes to inhibition of cytotoxic natural killer (NK) cells. May mediate MHC class I-independent 'missing-self' recognition of allografts, tumor cells and virus-infected cells. This Mus musculus (Mouse) protein is Killer cell lectin-like receptor subfamily B member 1B allele B (Klrb1b).